Reading from the N-terminus, the 119-residue chain is Flagellar transcriptional regulator FlhD (119 aa).

This sequence belongs to the FlhD family. As to quaternary structure, homodimer; disulfide-linked. Forms a heterohexamer composed of two FlhC and four FlhD subunits. Each FlhC binds a FlhD dimer, forming a heterotrimer, and a hexamer assembles by dimerization of two heterotrimers.

The protein resides in the cytoplasm. Its function is as follows. Functions in complex with FlhC as a master transcriptional regulator that regulates transcription of several flagellar and non-flagellar operons by binding to their promoter region. Activates expression of class 2 flagellar genes, including fliA, which is a flagellum-specific sigma factor that turns on the class 3 genes. Also regulates genes whose products function in a variety of physiological pathways. In Serratia marcescens, this protein is Flagellar transcriptional regulator FlhD.